Consider the following 142-residue polypeptide: Large ribosomal subunit protein uL23 (142 aa).

The protein belongs to the universal ribosomal protein uL23 family.

This protein binds to a specific region on the 26S rRNA. This Cyberlindnera jadinii (Torula yeast) protein is Large ribosomal subunit protein uL23 (RPL25).